Consider the following 466-residue polypeptide: ATP synthase subunit beta (466 aa).

152–159 (GGAGVGKT) contacts ATP.

The protein belongs to the ATPase alpha/beta chains family. As to quaternary structure, F-type ATPases have 2 components, CF(1) - the catalytic core - and CF(0) - the membrane proton channel. CF(1) has five subunits: alpha(3), beta(3), gamma(1), delta(1), epsilon(1). CF(0) has three main subunits: a(1), b(2) and c(9-12). The alpha and beta chains form an alternating ring which encloses part of the gamma chain. CF(1) is attached to CF(0) by a central stalk formed by the gamma and epsilon chains, while a peripheral stalk is formed by the delta and b chains.

The protein resides in the cell inner membrane. The enzyme catalyses ATP + H2O + 4 H(+)(in) = ADP + phosphate + 5 H(+)(out). Functionally, produces ATP from ADP in the presence of a proton gradient across the membrane. The catalytic sites are hosted primarily by the beta subunits. The chain is ATP synthase subunit beta from Sulfurovum sp. (strain NBC37-1).